The primary structure comprises 226 residues: Ribonuclease 3 (226 aa).

Positions 6–128 (INRLQRKLGY…LIGGVFLDSN (123 aa)) constitute an RNase III domain. Position 41 (Glu41) interacts with Mg(2+). Asp45 is a catalytic residue. Positions 114 and 117 each coordinate Mg(2+). The active site involves Glu117. One can recognise a DRBM domain in the interval 155 to 225 (DPKTRLQEYL…AEQVLKKLEL (71 aa)).

It belongs to the ribonuclease III family. In terms of assembly, homodimer. It depends on Mg(2+) as a cofactor.

It localises to the cytoplasm. It catalyses the reaction Endonucleolytic cleavage to 5'-phosphomonoester.. In terms of biological role, digests double-stranded RNA. Involved in the processing of primary rRNA transcript to yield the immediate precursors to the large and small rRNAs (23S and 16S). Processes some mRNAs, and tRNAs when they are encoded in the rRNA operon. Processes pre-crRNA and tracrRNA of type II CRISPR loci if present in the organism. The protein is Ribonuclease 3 of Salmonella choleraesuis (strain SC-B67).